Reading from the N-terminus, the 661-residue chain is DNA-directed RNA polymerase subunit beta' (661 aa).

4 residues coordinate Zn(2+): C69, C71, C87, and C90. The Mg(2+) site is built by D489, D491, and D493.

The protein belongs to the RNA polymerase beta' chain family. RpoC1 subfamily. As to quaternary structure, in plastids the minimal PEP RNA polymerase catalytic core is composed of four subunits: alpha, beta, beta', and beta''. When a (nuclear-encoded) sigma factor is associated with the core the holoenzyme is formed, which can initiate transcription. The cofactor is Mg(2+). Zn(2+) serves as cofactor.

The protein resides in the plastid. The protein localises to the chloroplast. It carries out the reaction RNA(n) + a ribonucleoside 5'-triphosphate = RNA(n+1) + diphosphate. Its function is as follows. DNA-dependent RNA polymerase catalyzes the transcription of DNA into RNA using the four ribonucleoside triphosphates as substrates. The protein is DNA-directed RNA polymerase subunit beta' of Chaetosphaeridium globosum (Charophycean green alga).